The chain runs to 383 residues: Erythronate-4-phosphate dehydrogenase (383 aa).

The substrate site is built by Ser-45 and Thr-67. Asp-147 provides a ligand contact to NAD(+). The active site involves Arg-208. Asp-232 serves as a coordination point for NAD(+). Glu-237 is a catalytic residue. Residue His-254 is the Proton donor of the active site. Gly-257 serves as a coordination point for NAD(+). A substrate-binding site is contributed by Tyr-258.

It belongs to the D-isomer specific 2-hydroxyacid dehydrogenase family. PdxB subfamily. In terms of assembly, homodimer.

The protein resides in the cytoplasm. The catalysed reaction is 4-phospho-D-erythronate + NAD(+) = (R)-3-hydroxy-2-oxo-4-phosphooxybutanoate + NADH + H(+). It functions in the pathway cofactor biosynthesis; pyridoxine 5'-phosphate biosynthesis; pyridoxine 5'-phosphate from D-erythrose 4-phosphate: step 2/5. Catalyzes the oxidation of erythronate-4-phosphate to 3-hydroxy-2-oxo-4-phosphonooxybutanoate. This Psychromonas ingrahamii (strain DSM 17664 / CCUG 51855 / 37) protein is Erythronate-4-phosphate dehydrogenase.